The chain runs to 161 residues: Cyclic pyranopterin monophosphate synthase (161 aa).

Residues 75–77 and 113–114 contribute to the substrate site; these read LCH and ME. D128 is a catalytic residue.

The protein belongs to the MoaC family. In terms of assembly, homohexamer; trimer of dimers.

It carries out the reaction (8S)-3',8-cyclo-7,8-dihydroguanosine 5'-triphosphate = cyclic pyranopterin phosphate + diphosphate. It participates in cofactor biosynthesis; molybdopterin biosynthesis. Catalyzes the conversion of (8S)-3',8-cyclo-7,8-dihydroguanosine 5'-triphosphate to cyclic pyranopterin monophosphate (cPMP). This Salmonella dublin (strain CT_02021853) protein is Cyclic pyranopterin monophosphate synthase.